Reading from the N-terminus, the 223-residue chain is Protein UGX2 (223 aa).

Over residues 78–95 the composition is skewed to basic residues; that stretch reads SNKRAKMKSKTKLTRTAK. Residues 78 to 117 are disordered; the sequence is SNKRAKMKSKTKLTRTAKQRRESPVCERDESDEDNDSDHY. Over residues 96–105 the composition is skewed to basic and acidic residues; the sequence is QRRESPVCER.

This Saccharomyces cerevisiae (strain ATCC 204508 / S288c) (Baker's yeast) protein is Protein UGX2 (UGX2).